The chain runs to 525 residues: Acyl-lipid (9-3)-desaturase (525 aa).

Residues 102-176 (KSTHPLSEVA…LQDFYIGDVE (75 aa)) enclose the Cytochrome b5 heme-binding domain. Heme is bound by residues H137 and H159. Residues 216-236 (VAIFAASIAIICWSKTISAVL) traverse the membrane as a helical segment. The short motif at 254-258 (HDFLH) is the Histidine box-1 element. A helical membrane pass occupies residues 266–286 (WLNEVVGYVIGNAVLGFSTGW). The short motif at 291 to 295 (HNLHH) is the Histidine box-2 element. The next 3 helical transmembrane spans lie at 340-360 (QHLFFMGLLFFARGSWLFWSW), 378-398 (GTVLFHYFWFVGTACYLLPGW), and 401-421 (LVWMAVTELMSGMLLGFVFVL). The Histidine box-3 motif lies at 462 to 466 (QIEHH).

Belongs to the fatty acid desaturase type 1 family.

The protein localises to the membrane. It carries out the reaction (9Z,12Z,15Z)-octadecatrienoyl-containing glycerolipid + 2 Fe(II)-[cytochrome b5] + O2 + 2 H(+) = (6Z,9Z,12Z,15Z)-octadecatetraenoyl-containing glycerolipid + 2 Fe(III)-[cytochrome b5] + 2 H2O. The enzyme catalyses a (9Z,12Z)-octadecadienoyl-containing glycerolipid + 2 Fe(II)-[cytochrome b5] + O2 + 2 H(+) = (6Z,9Z,12Z)-octadecatrienoyl-containing glycerolipid + 2 Fe(III)-[cytochrome b5] + 2 H2O. The protein operates within lipid metabolism; polyunsaturated fatty acid biosynthesis. Fatty acid desaturase able to introduce a delta(6)-double bond into delta(9)-unsaturated fatty-acid substrates. Can use both linoleic acid (18:2(9Z,12Z)) and alpha-linolenic acid (18:3(9Z,12Z,15Z)) as substrates. Required for the biosynthesis of arachidonic acid (20:4(5z,8Z,11Z,14Z)). In Physcomitrium patens (Spreading-leaved earth moss), this protein is Acyl-lipid (9-3)-desaturase.